Here is a 402-residue protein sequence, read N- to C-terminus: Zinc finger CCCH domain-containing protein 35 (402 aa).

2 consecutive C3H1-type zinc fingers follow at residues 117–144 (CYSGTACPDFRKGGCKRGDACEFAHGVF) and 152–176 (RYRTQPCKDGTACRRRVCFFAHTPD). 2 disordered regions span residues 180–211 (VLPPSQQQGSNSPRGCGGGGAGAAASPLAESY) and 232–258 (SSPTSTLVSPPRSPPSESPPLSPDAAG). Residues 183–192 (PSQQQGSNSP) show a composition bias toward polar residues. Residues 232–241 (SSPTSTLVSP) are compositionally biased toward low complexity. Pro residues predominate over residues 242–253 (PRSPPSESPPLS).

This Oryza sativa subsp. japonica (Rice) protein is Zinc finger CCCH domain-containing protein 35.